Reading from the N-terminus, the 427-residue chain is Peptidase B (427 aa).

Lysine 195 and aspartate 200 together coordinate Mn(2+). The active site involves lysine 207. Mn(2+) is bound by residues aspartate 218, aspartate 277, and glutamate 279. Arginine 281 is a catalytic residue.

It belongs to the peptidase M17 family. In terms of assembly, homohexamer. Requires Mn(2+) as cofactor.

The protein resides in the cytoplasm. The enzyme catalyses Release of an N-terminal amino acid, Xaa, from a peptide or arylamide. Xaa is preferably Glu or Asp but may be other amino acids, including Leu, Met, His, Cys and Gln.. Functionally, probably plays an important role in intracellular peptide degradation. In Escherichia coli O7:K1 (strain IAI39 / ExPEC), this protein is Peptidase B.